The primary structure comprises 312 residues: MKVAVLGAAGGIGQALALLLKTQLPSGSELSLYDIAPVTPGVAVDLSHIPTAVKVCGFGGEDASPALVGADIVLISAGVARKPGMDRSDLFNVNAGIIRNLIGQVARTSPNACIGIITNPVNTMVPIAAEVLKKAGVYNPNKLFGVTTLDIIRSNTFVGELKHLDPATLDIPVIGGHSGVTILPLLSQIPGVSLSEREVAELTKRIQNAGTEVVEAKAGGGSATLAMGQAAARFALSLVRAMQGDENVVECGYVESDGEYARFFAQPLLLGKAGLVQRLSIGTLSAFEQDALESMLEVLRKDIALGEDFINK.

Residues 7-13 (GAAGGIG) and aspartate 34 contribute to the NAD(+) site. 2 residues coordinate substrate: arginine 81 and arginine 87. NAD(+) contacts are provided by residues asparagine 94 and 117-119 (ITN). 2 residues coordinate substrate: asparagine 119 and arginine 153. Histidine 177 acts as the Proton acceptor in catalysis. Methionine 227 lines the NAD(+) pocket.

It belongs to the LDH/MDH superfamily. MDH type 1 family. As to quaternary structure, homodimer.

The catalysed reaction is (S)-malate + NAD(+) = oxaloacetate + NADH + H(+). Functionally, catalyzes the reversible oxidation of malate to oxaloacetate. This chain is Malate dehydrogenase, found in Edwardsiella ictaluri (strain 93-146).